A 564-amino-acid polypeptide reads, in one-letter code: Phomacin cluster regulator phmR (564 aa).

The segment at residues 33–64 (CDRCRGHKLRCIRDQMTVDSPCQRCRKAREKC) is a DNA-binding region (zn(2)-C6 fungal-type). Disordered stretches follow at residues 68–93 (SSTR…TSSA), 152–197 (DFAD…NPFL), and 252–278 (PIHP…DSTT). Polar residues-rich tracts occupy residues 182–192 (ITPTSQGTTAV) and 258–278 (MASS…DSTT).

Its subcellular location is the nucleus. Functionally, transcription factor that specifically regulates the expression of the gene cluster that mediates the biosynthesis of the mycotoxins phomacins, leucine-derived cytochalasans with potent actin polymerization-inhibitory activities and monocot-specific antigerminative activities. The protein is Phomacin cluster regulator phmR of Phaeosphaeria nodorum (strain SN15 / ATCC MYA-4574 / FGSC 10173) (Glume blotch fungus).